The sequence spans 267 residues: tRNA pseudouridine synthase A (267 aa).

The active-site Nucleophile is the Asp-53. Substrate is bound at residue Tyr-111.

The protein belongs to the tRNA pseudouridine synthase TruA family. In terms of assembly, homodimer.

The catalysed reaction is uridine(38/39/40) in tRNA = pseudouridine(38/39/40) in tRNA. Functionally, formation of pseudouridine at positions 38, 39 and 40 in the anticodon stem and loop of transfer RNAs. The protein is tRNA pseudouridine synthase A of Alcanivorax borkumensis (strain ATCC 700651 / DSM 11573 / NCIMB 13689 / SK2).